The following is a 213-amino-acid chain: Transcriptional regulatory protein YdfI (213 aa).

One can recognise a Response regulatory domain in the interval 3 to 118; it reads KVLIVDDHLV…TLFHTMDAAI (116 aa). A 4-aspartylphosphate modification is found at Asp-54. The 66-residue stretch at 142–207 folds into the HTH luxR-type domain; sequence KQRNETQLTE…EAVTIAMQKG (66 aa). A DNA-binding region (H-T-H motif) is located at residues 166-185; it reads SKAIAFDLGVSERTVKSRLT.

In terms of processing, phosphorylated by YdfH.

It localises to the cytoplasm. Its function is as follows. Member of the two-component regulatory system YdfH/YdfI. Regulates the transcription of ydfJ by binding to its promoter region. This is Transcriptional regulatory protein YdfI (ydfI) from Bacillus subtilis (strain 168).